The chain runs to 334 residues: Gap junction alpha-2 protein (334 aa).

At 1 to 12 (MAGWELLKLLLD) the chain is on the cytoplasmic side. A helical membrane pass occupies residues 13–35 (DVQEHSTLIGKVWLTVLFIFRIF). Over 36–75 (ILSVAGESVWTDEQSDFICNTQQPGCTNVCYDQAFPISHV) the chain is Extracellular. A helical membrane pass occupies residues 76-98 (RYWVLQFLFVSTPTLIYLGHMVY). At 99–153 (LSKKEEKERQKENESRILVANEAQTEVHSSATKKIRIQGPLMCTYTTSVVFKSIF) the chain is on the cytoplasmic side. Residues 154–176 (EAGFLLGQWYIYGFVMSPIFVCE) traverse the membrane as a helical segment. Residues 177-207 (RIPCKHKVECFVSRPMEKTIFIIFMLVVSLI) are Extracellular-facing. A helical transmembrane segment spans residues 208–230 (SLLLNLMELIHLSFKCFQHGIKE). Residues 231–334 (GATCSPTGIP…HQTSSKQQYV (104 aa)) are Cytoplasmic-facing.

It belongs to the connexin family. Alpha-type (group II) subfamily. In terms of assembly, a connexon is composed of a hexamer of connexins. As to expression, resides primarily in the ovary, oocytes and early embryos.

The protein resides in the cell membrane. It is found in the cell junction. The protein localises to the gap junction. One gap junction consists of a cluster of closely packed pairs of transmembrane channels, the connexons, through which materials of low MW diffuse from one cell to a neighboring cell. The polypeptide is Gap junction alpha-2 protein (gja2) (Xenopus laevis (African clawed frog)).